The chain runs to 360 residues: 3-isopropylmalate dehydrogenase (360 aa).

76-89 (GPKWDKIERDIRPE) contributes to the NAD(+) binding site. Residues Arg-96, Arg-106, Arg-134, and Asp-224 each contribute to the substrate site. Mg(2+) is bound by residues Asp-224, Asp-248, and Asp-252. 282 to 294 (GSAPDIAGLGIAN) contacts NAD(+).

It belongs to the isocitrate and isopropylmalate dehydrogenases family. LeuB type 1 subfamily. As to quaternary structure, homodimer. Mg(2+) is required as a cofactor. It depends on Mn(2+) as a cofactor.

The protein localises to the cytoplasm. The catalysed reaction is (2R,3S)-3-isopropylmalate + NAD(+) = 4-methyl-2-oxopentanoate + CO2 + NADH. It functions in the pathway amino-acid biosynthesis; L-leucine biosynthesis; L-leucine from 3-methyl-2-oxobutanoate: step 3/4. Functionally, catalyzes the oxidation of 3-carboxy-2-hydroxy-4-methylpentanoate (3-isopropylmalate) to 3-carboxy-4-methyl-2-oxopentanoate. The product decarboxylates to 4-methyl-2 oxopentanoate. This Pseudomonas putida (strain ATCC 47054 / DSM 6125 / CFBP 8728 / NCIMB 11950 / KT2440) protein is 3-isopropylmalate dehydrogenase.